The primary structure comprises 130 residues: uncharacterized protein (130 aa).

The tract at residues 1 to 100 (MSSNSDNTEC…AEPDAAKEEP (100 aa)) is disordered. 2 stretches are compositionally biased toward basic and acidic residues: residues 57–75 (YTTRSKYESDVSEFKKMMD) and 91–100 (AEPDAAKEEP).

This is an uncharacterized protein from Equine herpesvirus 1 (strain Ab4p) (EHV-1).